We begin with the raw amino-acid sequence, 1041 residues long: FHIP family protein CG3558 (1041 aa).

Phosphoserine is present on Ser490. Disordered regions lie at residues Arg619–Leu648, Lys792–Leu818, Ser858–Ser879, Asp903–Ser947, and Ser959–Ala986. The segment covering Thr628–Ser637 has biased composition (polar residues). Ser797 carries the post-translational modification Phosphoserine. A compositionally biased stretch (polar residues) spans His800–Leu818. The segment covering Asp903 to Pro925 has biased composition (polar residues). A compositionally biased stretch (low complexity) spans Ala927–Ser947. Residues Ser959 to Thr968 show a composition bias toward polar residues.

Belongs to the FHIP family.

In Drosophila melanogaster (Fruit fly), this protein is FHIP family protein CG3558.